A 234-amino-acid chain; its full sequence is PHD finger protein ING1 (234 aa).

The segment at 129–166 (NNGKAGNAGEGGRGGRKKTRLATAASTAAASTGMTSSN) is disordered. Low complexity predominate over residues 149 to 165 (LATAASTAAASTGMTSS). A PHD-type zinc finger spans residues 178–227 (PTYCICNQVSFGEMVACDNNACKIEWFHFGCVGLKEQPKGKWYCPECATV). C181, C183, C194, C199, H205, C208, C221, and C224 together coordinate Zn(2+).

Belongs to the ING family. Interacts with H3K4me3 and to a lesser extent with H3K4me2. As to expression, ubiquitously expressed.

It is found in the nucleus. Its function is as follows. Histone-binding component that specifically recognizes H3 tails trimethylated on 'Lys-4' (H3K4me3), which mark transcription start sites of virtually all active genes. The polypeptide is PHD finger protein ING1 (ING1) (Arabidopsis thaliana (Mouse-ear cress)).